Consider the following 630-residue polypeptide: Plastin-1 (630 aa).

Residues 1–114 (MENNVTTISR…LGGTSSISTE (114 aa)) are fimbrin headpiece. 2 consecutive EF-hand domains span residues 11–46 (EELE…ASLP) and 51–86 (KVRE…LKSK). Residues Asp-24, Asp-26, Ser-28, Tyr-30, Glu-35, Asp-64, Asn-66, Asp-68, Lys-70, and Glu-75 each coordinate Ca(2+). Actin-binding stretches follow at residues 108–375 (TSSI…LFNT) and 376–624 (YPAL…LMGR). Positions 115 to 630 (GTQHSYSEEE…LMGRGLNKIK (516 aa)) are fimbrin core. 4 consecutive Calponin-homology (CH) domains span residues 122–238 (EEEK…KVGL), 266–377 (LSPE…NTYP), 396–505 (SNEE…RRYT), and 517–626 (KVND…GRGL).

Monomer. The N-terminus is blocked.

Its subcellular location is the cytoplasm. It is found in the cell projection. The protein localises to the stereocilium. Its function is as follows. Actin-bundling protein. In the inner ear, it is required for stereocilia formation. Mediates liquid packing of actin filaments that is necessary for stereocilia to grow to their proper dimensions. This is Plastin-1 (PLS1) from Gallus gallus (Chicken).